The primary structure comprises 244 residues: MAGHSKWAQIKRKKGANDKKRSAMYSKHIRAIQAAVRSGGSGDPAGNLSLKNAIAAAKTDTVPADNIENAIKRAVGAGEGAAEYKEQTYEGYGPGGTAIFIETLTDNVNRTVADIRAVFNKRGGSMGNSGSVAWQFEKKGIILLRDASEAAQEVAIENGAEDIQESDEGLEISTAPNDLYAVQDALSAAGYAVESGQITMLPTNTVAVAGDDARKLLTLVEYLEELDDVQNVYTNADLPEDEED.

The disordered stretch occupies residues 1-23; it reads MAGHSKWAQIKRKKGANDKKRSA.

This sequence belongs to the TACO1 family.

The protein localises to the cytoplasm. This chain is Probable transcriptional regulatory protein DR_2548, found in Deinococcus radiodurans (strain ATCC 13939 / DSM 20539 / JCM 16871 / CCUG 27074 / LMG 4051 / NBRC 15346 / NCIMB 9279 / VKM B-1422 / R1).